A 141-amino-acid chain; its full sequence is 6,7-dimethyl-8-ribityllumazine synthase (141 aa).

Residues Phe14, 46 to 48, and 70 to 72 contribute to the 5-amino-6-(D-ribitylamino)uracil site; these read VFD and CVI. 75 to 76 contacts (2S)-2-hydroxy-3-oxobutyl phosphate; it reads ET. His78 (proton donor) is an active-site residue. Residue Leu103 coordinates 5-amino-6-(D-ribitylamino)uracil. Position 118 (Arg118) interacts with (2S)-2-hydroxy-3-oxobutyl phosphate.

Forms an icosahedral capsid composed of 60 subunits, arranged as a dodecamer of pentamers.

It carries out the reaction (2S)-2-hydroxy-3-oxobutyl phosphate + 5-amino-6-(D-ribitylamino)uracil = 6,7-dimethyl-8-(1-D-ribityl)lumazine + phosphate + 2 H2O + H(+). It participates in cofactor biosynthesis; riboflavin biosynthesis; riboflavin from 2-hydroxy-3-oxobutyl phosphate and 5-amino-6-(D-ribitylamino)uracil: step 1/2. Functionally, catalyzes the formation of 6,7-dimethyl-8-ribityllumazine by condensation of 5-amino-6-(D-ribitylamino)uracil with 3,4-dihydroxy-2-butanone 4-phosphate. This is the penultimate step in the biosynthesis of riboflavin. The sequence is that of 6,7-dimethyl-8-ribityllumazine synthase (ribH) from Methanocaldococcus jannaschii (strain ATCC 43067 / DSM 2661 / JAL-1 / JCM 10045 / NBRC 100440) (Methanococcus jannaschii).